Here is a 1066-residue protein sequence, read N- to C-terminus: Protein sts5 (1066 aa).

Residues 18–28 (QQDPSDAQSSP) show a composition bias toward low complexity. 3 disordered regions span residues 18–40 (QQDP…SLTT), 154–178 (ATST…SPNS), and 247–286 (SNFR…RKNL). Polar residues predominate over residues 29 to 40 (TFVPSANPSLTT). At T157 the chain carries Phosphothreonine. Low complexity predominate over residues 168 to 178 (HSVASVSSPNS). Position 262 is a phosphothreonine (T262). S264 carries the phosphoserine modification. Residues 270–280 (SGSGFSSGGSG) show a composition bias toward gly residues. T377 bears the Phosphothreonine mark. Positions 454–480 (SSAANKERQTSSGNQGSSNNSGNDKPK) are disordered. The segment covering 464–476 (SSGNQGSSNNSGN) has biased composition (low complexity). The CSD2 domain occupies 482–556 (VWFKPSDKRV…AQVSALLHDT (75 aa)). Residues 618-934 (NINSSSATDF…VHYQLQLLLR (317 aa)) enclose the RNB domain. The DIS3L2 C-terminal domain maps to 983-1033 (QDGLVCFVAPSYFDVFFPSLGMEKRVHLDLLNLTHVRFEEDQGILSLYDES).

Belongs to the RNR ribonuclease family. As to quaternary structure, interacts with serine/threonine phosphatase ppe1, protein kinase C and an osmosensing MAP kinase.

It is found in the cytoplasm. Functionally, required for the maintenance of cell shape during interphase. Required for localization of cortical actin to the growing tips before mitosis. The chain is Protein sts5 (sts5) from Schizosaccharomyces pombe (strain 972 / ATCC 24843) (Fission yeast).